A 188-amino-acid chain; its full sequence is Peptidyl-tRNA hydrolase (188 aa).

Position 15 (tyrosine 15) interacts with tRNA. The active-site Proton acceptor is histidine 20. Positions 64, 66, and 112 each coordinate tRNA.

Belongs to the PTH family. In terms of assembly, monomer.

Its subcellular location is the cytoplasm. The enzyme catalyses an N-acyl-L-alpha-aminoacyl-tRNA + H2O = an N-acyl-L-amino acid + a tRNA + H(+). In terms of biological role, hydrolyzes ribosome-free peptidyl-tRNAs (with 1 or more amino acids incorporated), which drop off the ribosome during protein synthesis, or as a result of ribosome stalling. Its function is as follows. Catalyzes the release of premature peptidyl moieties from peptidyl-tRNA molecules trapped in stalled 50S ribosomal subunits, and thus maintains levels of free tRNAs and 50S ribosomes. The polypeptide is Peptidyl-tRNA hydrolase (Cytophaga hutchinsonii (strain ATCC 33406 / DSM 1761 / CIP 103989 / NBRC 15051 / NCIMB 9469 / D465)).